We begin with the raw amino-acid sequence, 616 residues long: Heme A synthase-mitochondrial ferredoxin fusion protein (616 aa).

The N-terminal 45 residues, 1 to 45, are a transit peptide targeting the mitochondrion; it reads MNISRSSGLMRQFLLQPLRKGCDISCLGRSSWRMSRSFSGSSVLN. The interval 45 to 465 is heme a synthase cox15-like; it reads NEINLSRTKN…AALSLAQRLH (421 aa). Over 46 to 97 the chain is Mitochondrial matrix; the sequence is EINLSRTKNLFLNDCKFNKNSFEKFFARRLSNSVAPTPGGILQETEKIPSKK. A helical transmembrane segment spans residues 98–118; the sequence is VAFWLLGSSALVLAIVVVGGI. Residues 119 to 182 are Mitochondrial intermembrane-facing; the sequence is TRLTESGLSI…NIFFWEWFHR (64 aa). H181 is a heme o binding site. Residues 183–203 traverse the membrane as a helical segment; the sequence is VLGRGIGLTILLPSIYMIVTK. Over 204–212 the chain is Mitochondrial matrix; sequence RASPWLSKR. The helical transmembrane segment at 213–233 threads the bilayer; sequence LIGLTGLVGLQGVIGWWMVKS. Over 234–254 the chain is Mitochondrial intermembrane; the sequence is GLSEELFSDGSHPRVSHYRLA. The helical transmembrane segment at 255–275 threads the bilayer; that stretch reads THLAAAVALYIGLVWTGHGIL. Residue H256 coordinates heme o. Topologically, residues 276–311 are mitochondrial matrix; that stretch reads QRHAFLKSMKSGSTSQLTSMVSSVQKMKGFRTSVNS. A helical membrane pass occupies residues 312–332; the sequence is FVGLVLITLLSGAFVAGLDAG. Over 333 to 380 the chain is Mitochondrial intermembrane; the sequence is MIYCTFPEMGEGRLAPSKSELFDQRFCRKDDKSDLIWRNMIDNPSLVQ. Residues 381-401 form a helical membrane-spanning segment; it reads LEHRILAITTFVAACGLFIFS. Heme b is bound at residue H383. The Mitochondrial matrix portion of the chain corresponds to 402 to 417; the sequence is RAKRNILPKKIKTSIN. A helical transmembrane segment spans residues 418-438; it reads VVTGVVTAQATLGIMTLIYVV. Position 439 (P439) is a topological domain, mitochondrial intermembrane. A helical membrane pass occupies residues 440 to 460; it reads VPLAALHQAGSLVTLTAALSL. H446 provides a ligand contact to heme b. Residues 461–616 are Mitochondrial matrix-facing; the sequence is AQRLHPEYAL…RNIRLERPKA (156 aa). The 105-residue stretch at 502 to 606 folds into the 2Fe-2S ferredoxin-type domain; sequence FRPSFHSEIK…GIRVRIPAQT (105 aa). The interval 516–616 is mitochondrial ferredoxin yah1-like; it reads GTGIKVFFVT…RNIRLERPKA (101 aa). Residues C541, C547, C550, and C587 each contribute to the [2Fe-2S] cluster site.

This sequence in the N-terminal section; belongs to the COX15/CtaA family. Type 2 subfamily. The protein in the C-terminal section; belongs to the adrenodoxin/putidaredoxin family. In terms of assembly, homodimer. It depends on heme b as a cofactor. Requires [2Fe-2S] cluster as cofactor. In terms of processing, the etp1 preprotein is cleaved into 2 chains after imort into mitochondria. The N-terminal chain containing a heme A synthase cox15-like domain etp1(cd) is a subunit of the membrane-embedded cytochrome c oxidase complex and functions in the respiratory chain. The C-terminal chain containing a ferredoxin yah1-like domain etp1(fd) is released and serves in the matrix as electron transfer protein.

Its subcellular location is the mitochondrion inner membrane. It localises to the mitochondrion matrix. It catalyses the reaction Fe(II)-heme o + 2 A + H2O = Fe(II)-heme a + 2 AH2. Its pathway is porphyrin-containing compound metabolism; heme A biosynthesis; heme A from heme O: step 1/1. Catalyzes the second reaction in the biosynthesis of heme A, a prosthetic group of mitochondrial cytochrome c oxidase (CcO). Heme A is synthesized from heme B by two sequential enzymatic reactions catalyzed by heme O synthase (HOS) and heme A synthase (HAS). HAS catalyzes the conversion of heme O to heme A by two successive hydroxylations of the methyl group at C8, in a reaction that involves matrix ferredoxin and ferredoxin reductase. The first hydroxylation forms heme I, the second hydroxylation results in an unstable dihydroxymethyl group, which spontaneously dehydrates, resulting in the formyl group of heme A. In terms of biological role, iron-sulfur protein that transfers electrons in a wide variety of metabolic reactions. Involved in heme A biosynthesis and in iron-sulfur cluster assembly. Transfers electrons from adrenodoxin reductase arh1 to heme A synthase etp1(cd), a heme protein that catalyzes the conversion of heme O to heme A. Required for the de novo synthesis of Fe-S clusters on iron sulfur cluster assembly protein isu1. Interact in its reduced state with isu1 to productively deliver electrons for Fe-S cluster synthesis. Essential for coenzyme Q biosynthesis. May transfer the electrons required for the hydroxylation reaction performed by coq6. In Schizosaccharomyces pombe (strain 972 / ATCC 24843) (Fission yeast), this protein is Heme A synthase-mitochondrial ferredoxin fusion protein.